Here is a 519-residue protein sequence, read N- to C-terminus: Cyclic AMP-responsive element-binding protein 3-like protein 2 (519 aa).

The Cytoplasmic portion of the chain corresponds to 1–374; sequence MEIMDSGEPF…SCRVTGTQTS (374 aa). Disordered stretches follow at residues 58–77, 85–121, and 193–261; these read GRGD…PVPP, YSLC…MEQE, and GLEC…SGPL. Over residues 109-119 the composition is skewed to acidic residues; that stretch reads ADSESDEWPME. Low complexity-rich tracts occupy residues 205 to 217 and 240 to 249; these read SSVG…SQSP and PSSLSSSPLL. The 64-residue stretch at 291–354 folds into the bZIP domain; sequence ALKKIRRKIK…KSLLQQLHSL (64 aa). Residues 293–322 form a basic motif region; sequence KKIRRKIKNKISAQESRRKKKEYVDALEKK. Positions 333 to 354 are leucine-zipper; sequence LRRKVENLECTNKSLLQQLHSL. A helical; Signal-anchor for type II membrane protein transmembrane segment spans residues 375–395; sequence TCLMVVVLCFSLFLGSFYPGL. Topologically, residues 396–519 are lumenal; the sequence is SPCSSITKAD…QLDRTVNETS (124 aa). The S1P recognition motif lies at 423-426; the sequence is RSLL. N485, N503, and N516 each carry an N-linked (GlcNAc...) asparagine glycan.

This sequence belongs to the bZIP family. ATF subfamily. In terms of assembly, binds DNA as a dimer. Upon ER stress, translocated to the Golgi apparatus, where it is processed by regulated intramembrane proteolysis (RIP) to release the cytosol-facing N-terminal transcription factor domain. The cleavage is performed sequentially by site-1 and site-2 proteases (S1P/mbtps1 and S2P/mbtps2).

It is found in the endoplasmic reticulum membrane. Its subcellular location is the nucleus. Transcription factor involved in unfolded protein response (UPR). In the absence of endoplasmic reticulum (ER) stress, inserted into ER membranes, with N-terminal DNA-binding and transcription activation domains oriented toward the cytosolic face of the membrane. In response to ER stress, transported to the Golgi, where it is cleaved in a site-specific manner by resident proteases S1P/mbtps1 and S2P/mbtps2. The released N-terminal cytosolic domain is translocated to the nucleus to effect transcription of specific target genes. Plays a critical role in chondrogenesis. May protect neuroblastoma cells from ER stress-induced death. In vitro activates transcription of target genes via direct binding to the CRE site. The sequence is that of Cyclic AMP-responsive element-binding protein 3-like protein 2 (creb3l2) from Danio rerio (Zebrafish).